The chain runs to 180 residues: Large ribosomal subunit protein uL5 (180 aa).

The protein belongs to the universal ribosomal protein uL5 family. Part of the 50S ribosomal subunit; part of the 5S rRNA/L5/L18/L25 subcomplex. Contacts the 5S rRNA and the P site tRNA. Forms a bridge to the 30S subunit in the 70S ribosome.

Its function is as follows. This is one of the proteins that bind and probably mediate the attachment of the 5S RNA into the large ribosomal subunit, where it forms part of the central protuberance. In the 70S ribosome it contacts protein S13 of the 30S subunit (bridge B1b), connecting the 2 subunits; this bridge is implicated in subunit movement. Contacts the P site tRNA; the 5S rRNA and some of its associated proteins might help stabilize positioning of ribosome-bound tRNAs. In Rippkaea orientalis (strain PCC 8801 / RF-1) (Cyanothece sp. (strain PCC 8801)), this protein is Large ribosomal subunit protein uL5.